A 204-amino-acid chain; its full sequence is FMN-dependent NADH:quinone oxidoreductase 1 (204 aa).

Residues serine 14, 20 to 22, and 99 to 102 each bind FMN; these read SMS and MYNF.

The protein belongs to the azoreductase type 1 family. As to quaternary structure, homodimer. FMN is required as a cofactor.

The catalysed reaction is 2 a quinone + NADH + H(+) = 2 a 1,4-benzosemiquinone + NAD(+). The enzyme catalyses N,N-dimethyl-1,4-phenylenediamine + anthranilate + 2 NAD(+) = 2-(4-dimethylaminophenyl)diazenylbenzoate + 2 NADH + 2 H(+). Quinone reductase that provides resistance to thiol-specific stress caused by electrophilic quinones. Functionally, also exhibits azoreductase activity. Catalyzes the reductive cleavage of the azo bond in aromatic azo compounds to the corresponding amines. The protein is FMN-dependent NADH:quinone oxidoreductase 1 of Hahella chejuensis (strain KCTC 2396).